A 699-amino-acid chain; its full sequence is 1,4-alpha-glucan-branching enzyme (699 aa).

Substrate-binding positions include 59–60 (NE) and 88–90 (WAP). (1,4-alpha-D-glucosyl)n is bound at residue tryptophan 104. 115–118 (DYGK) lines the substrate pocket. Lysine 140 contributes to the (1,4-alpha-D-glucosyl)n binding site. Phosphotyrosine is present on tyrosine 170. 330–333 (EVLR) is a substrate binding site. The active-site Nucleophile is the aspartate 354. The active-site Proton donor is glutamate 409.

It belongs to the glycosyl hydrolase 13 family. GlgB subfamily. Monomer.

It catalyses the reaction Transfers a segment of a (1-&gt;4)-alpha-D-glucan chain to a primary hydroxy group in a similar glucan chain.. It participates in glycan biosynthesis; glycogen biosynthesis. Functionally, glycogen-branching enzyme participates in the glycogen biosynthetic process along with glycogenin and glycogen synthase. Generates alpha-1,6-glucosidic branches from alpha-1,4-linked glucose chains, to increase solubility of the glycogen polymer. This Felis catus (Cat) protein is 1,4-alpha-glucan-branching enzyme (GBE1).